A 511-amino-acid polypeptide reads, in one-letter code: Maturase K (511 aa).

This sequence belongs to the intron maturase 2 family. MatK subfamily.

It localises to the plastid. Its subcellular location is the chloroplast. Usually encoded in the trnK tRNA gene intron. Probably assists in splicing its own and other chloroplast group II introns. The chain is Maturase K from Poa pratensis (Kentucky bluegrass).